Reading from the N-terminus, the 164-residue chain is Osteocalcin 2b (164 aa).

Positions 1 to 18 (MKSLTLLTICAVLSVSLS) are cleaved as a signal peptide. Positions 19-115 (MNDLALDVVL…LASVLLRRKR (97 aa)) are excised as a propeptide. The segment covering 30–95 (PDPAAEPAPA…EAMAEDPAAA (66 aa)) has biased composition (low complexity). The interval 30–99 (PDPAAEPAPA…EDPAAATEPE (70 aa)) is disordered. The region spanning 128-160 (QVESLSEVCELNLACEHMAETAGIVAAYTAYYG) is the Gla domain. Positions 130, 134, and 137 each coordinate Ca(2+). Residues E130, E134, and E137 each carry the 4-carboxyglutamate modification. A disulfide bridge links C136 with C142.

Belongs to the osteocalcin/matrix Gla protein family. In terms of processing, gamma-carboxyglutamate residues are formed by vitamin K dependent carboxylation. These residues are essential for the binding of calcium.

The protein resides in the secreted. In terms of biological role, binds strongly to apatite and calcium. This Oncorhynchus mykiss (Rainbow trout) protein is Osteocalcin 2b.